Reading from the N-terminus, the 255-residue chain is CDP-diacylglycerol pyrophosphatase (255 aa).

A helical membrane pass occupies residues 5-27 (LLITVALIAVLALTTLVAWRYLF).

Belongs to the Cdh family.

It is found in the cell inner membrane. The catalysed reaction is a CDP-1,2-diacyl-sn-glycerol + H2O = a 1,2-diacyl-sn-glycero-3-phosphate + CMP + 2 H(+). It functions in the pathway phospholipid metabolism; CDP-diacylglycerol degradation; phosphatidate from CDP-diacylglycerol: step 1/1. The polypeptide is CDP-diacylglycerol pyrophosphatase (Cronobacter sakazakii (strain ATCC BAA-894) (Enterobacter sakazakii)).